A 285-amino-acid chain; its full sequence is Polyamine aminopropyltransferase (285 aa).

In terms of domain architecture, PABS spans 2–237; it reads DLWFSESHTP…GYWCFGFASK (236 aa). Gln-31 is an S-methyl-5'-thioadenosine binding site. Position 86 (Asp-86) interacts with spermidine. S-methyl-5'-thioadenosine is bound by residues Glu-106 and 137–138; that span reads DG. Asp-155 serves as the catalytic Proton acceptor.

The protein belongs to the spermidine/spermine synthase family. Homodimer or homotetramer.

The protein resides in the cytoplasm. It carries out the reaction S-adenosyl 3-(methylsulfanyl)propylamine + putrescine = S-methyl-5'-thioadenosine + spermidine + H(+). It functions in the pathway amine and polyamine biosynthesis; spermidine biosynthesis; spermidine from putrescine: step 1/1. Catalyzes the irreversible transfer of a propylamine group from the amino donor S-adenosylmethioninamine (decarboxy-AdoMet) to putrescine (1,4-diaminobutane) to yield spermidine. This Streptococcus uberis (strain ATCC BAA-854 / 0140J) protein is Polyamine aminopropyltransferase.